A 353-amino-acid polypeptide reads, in one-letter code: Probable tRNA pseudouridine synthase B (353 aa).

The active-site Nucleophile is the aspartate 45. The region spanning 211–287 (YPKIVAKKSA…DHIFVEAKHG (77 aa)) is the PUA domain. The disordered stretch occupies residues 292 to 353 (VRDREKDVQR…TGVHRRPGSH (62 aa)). Residues 309–328 (NIRDAAHGPDSRTGRGRKET) are compositionally biased toward basic and acidic residues. Residues 336–353 (RVRKLQNKTGVHRRPGSH) show a composition bias toward basic residues.

Belongs to the pseudouridine synthase TruB family. Type 2 subfamily.

It carries out the reaction uridine(55) in tRNA = pseudouridine(55) in tRNA. Could be responsible for synthesis of pseudouridine from uracil-55 in the psi GC loop of transfer RNAs. This chain is Probable tRNA pseudouridine synthase B, found in Thermoplasma volcanium (strain ATCC 51530 / DSM 4299 / JCM 9571 / NBRC 15438 / GSS1).